Reading from the N-terminus, the 147-residue chain is Cyclic di-AMP receptor B (147 aa).

The region spanning 18–78 (MIEADKVAHV…SIFGLERIEF (61 aa)) is the CBS domain. The 3',3'-c-di-AMP site is built by Lys23, Ala25, Thr46, Ala47, and Arg131.

In terms of assembly, homodimer. Forms a homodimer with a parallel, head-to-head assembly of the monomers. Under conditions of potassium starvation and corresponding low c-di-AMP levels, apo-DarB specifically interacts with the N-terminal region of the RelA. Under the same conditions, apo-DarB also specifically interacts with the C-terminal part of the pyruvate carboxylase.

Binds c-di-AMP. Binding of c-di-AMP to DarB inhibits the interaction with RelA and PYC. Involved in the c-di-AMP-dependent regulation of the bacterial stringent response. Modulates the activities of at least two enzymes under conditions of potassium limitation. Apo-DarB regulates the activity of the GTP pyrophosphokinase RelA by interacting directly with RelA, leading to stimulation of (p)ppGpp synthesis and induction of the stringent response. Apo-DarB also regulates pyruvate carboxylase (PYC) at two levels: directly at the protein level by binding to the enzyme and stimulating the synthesis of oxaloacetate and indirectly, by interaction with RelA, which leads to activation of the stringent response and to the increased expression of the pycA gene. Stimulation of these enzymes by DarB is prevented in the presence of cyclic di-AMP (c-di-AMP). The protein is Cyclic di-AMP receptor B of Bacillus subtilis (strain 168).